The chain runs to 179 residues: Inorganic pyrophosphatase (179 aa).

Positions 30, 44, and 56 each coordinate substrate. Mg(2+)-binding residues include aspartate 66, aspartate 71, and aspartate 103. Substrate is bound at residue tyrosine 142.

Belongs to the PPase family. Homohexamer. It depends on Mg(2+) as a cofactor.

Its subcellular location is the cytoplasm. It catalyses the reaction diphosphate + H2O = 2 phosphate + H(+). Its function is as follows. Catalyzes the hydrolysis of inorganic pyrophosphate (PPi) forming two phosphate ions. In Rhodospirillum rubrum (strain ATCC 11170 / ATH 1.1.1 / DSM 467 / LMG 4362 / NCIMB 8255 / S1), this protein is Inorganic pyrophosphatase.